The chain runs to 214 residues: Imidazole glycerol phosphate synthase subunit HisH (214 aa).

One can recognise a Glutamine amidotransferase type-1 domain in the interval 3-211 (IIAVIDYDMG…VEQVQATLAT (209 aa)). Residue C81 is the Nucleophile of the active site. Catalysis depends on residues H186 and E188.

Heterodimer of HisH and HisF.

It localises to the cytoplasm. The enzyme catalyses 5-[(5-phospho-1-deoxy-D-ribulos-1-ylimino)methylamino]-1-(5-phospho-beta-D-ribosyl)imidazole-4-carboxamide + L-glutamine = D-erythro-1-(imidazol-4-yl)glycerol 3-phosphate + 5-amino-1-(5-phospho-beta-D-ribosyl)imidazole-4-carboxamide + L-glutamate + H(+). The catalysed reaction is L-glutamine + H2O = L-glutamate + NH4(+). Its pathway is amino-acid biosynthesis; L-histidine biosynthesis; L-histidine from 5-phospho-alpha-D-ribose 1-diphosphate: step 5/9. Functionally, IGPS catalyzes the conversion of PRFAR and glutamine to IGP, AICAR and glutamate. The HisH subunit catalyzes the hydrolysis of glutamine to glutamate and ammonia as part of the synthesis of IGP and AICAR. The resulting ammonia molecule is channeled to the active site of HisF. The sequence is that of Imidazole glycerol phosphate synthase subunit HisH from Acaryochloris marina (strain MBIC 11017).